The primary structure comprises 277 residues: MGSQQAAVSFLSNLAKAAFGLGTAATVLNTSLFTVDGGERAVIFDRFRGVMDQTVGEGTHFLIPILQRPHIFDIRTKPHTFSSISGTKDLQMVNLTLRVLSRPEVSRLPYIFQTLGLEYDEKVLPSIGNEVLKAVVAQFNADQLLTERPHVSALVRESLITRAKDFNIVLDDVAITHLSYGVEFSRAVEQKQVAQQEAERSKFVVMKADQERRAAVIRAEGESEAAQLISDATAKAGMGLIELRRIEASREIASTLARSPNVAYLPGGQSMLFALNR.

Position 2 is an N-acetylglycine (G2). The Mitochondrial matrix portion of the chain corresponds to 2–6 (GSQQA). A helical; Signal-anchor for type II membrane protein membrane pass occupies residues 7–28 (AVSFLSNLAKAAFGLGTAATVL). Topologically, residues 29–277 (NTSLFTVDGG…GQSMLFALNR (249 aa)) are mitochondrial intermembrane.

The protein belongs to the prohibitin family. As to quaternary structure, component of a prohibitin multimeric complex in mitochondrial membranes. As to expression, mostly expressed in proliferative tissues, including vasculature, shoot and root apical tissues. Expressed in roots, stems, leaves and flowers (at protein level).

Its subcellular location is the cell membrane. The protein resides in the mitochondrion inner membrane. It is found in the nucleus. The protein localises to the cytoplasm. Prohibitin probably acts as a holdase/unfoldase for the stabilization of newly synthesized mitochondrial proteins. Necessary for mitochondrial and cell metabolism and biogenesis. Required to regulate the ethylene-mediated signaling; involved in growth maintenance in the presence of ethylene. Functions in nitric oxide (NO)-mediated responses and in hydrogen peroxide-induced NO accumulation. This Arabidopsis thaliana (Mouse-ear cress) protein is Prohibitin-3, mitochondrial (PHB3).